The sequence spans 512 residues: Cytochrome P450 71BT1 (512 aa).

The first 24 residues, 1–24, serve as a signal peptide directing secretion; sequence MENLFIFLFALLLFCFMLLKLSKK. N-linked (GlcNAc...) asparagine glycans are attached at residues Asn-111 and Asn-168. Cys-447 serves as a coordination point for heme.

Belongs to the cytochrome P450 family.

This Catharanthus roseus (Madagascar periwinkle) protein is Cytochrome P450 71BT1.